A 177-amino-acid polypeptide reads, in one-letter code: O-acetyl-ADP-ribose deacetylase (177 aa).

The region spanning 1 to 175 is the Macro domain; that stretch reads MKTRIHVVQG…LYERLLTQQG (175 aa). Residues 11–12, asparagine 25, 33–35, and 122–126 contribute to the substrate site; these read DI, GVD, and STGVY. Aspartate 35 functions as the Proton acceptor in the catalytic mechanism.

The protein belongs to the MacroD-type family. YmdB subfamily. In terms of assembly, homodimer. Interacts with RNase III.

The catalysed reaction is 3''-O-acetyl-ADP-D-ribose + H2O = ADP-D-ribose + acetate + H(+). The enzyme catalyses 2''-O-acetyl-ADP-D-ribose + H2O = ADP-D-ribose + acetate + H(+). In terms of biological role, deacetylates O-acetyl-ADP ribose to yield ADP-ribose and free acetate. Down-regulates ribonuclease 3 (RNase III) activity. Acts by interacting directly with the region of the ribonuclease that is required for dimerization/activation. The polypeptide is O-acetyl-ADP-ribose deacetylase (Escherichia coli O157:H7).